We begin with the raw amino-acid sequence, 56 residues long: Ferredoxin (56 aa).

2 4Fe-4S ferredoxin-type domains span residues 2–29 (AYVI…AGDD) and 29–56 (DKYV…PQPE). [4Fe-4S] cluster contacts are provided by Cys-9, Cys-12, Cys-15, Cys-19, Cys-38, Cys-41, Cys-44, and Cys-48.

[4Fe-4S] cluster serves as cofactor.

Ferredoxins are iron-sulfur proteins that transfer electrons in a wide variety of metabolic reactions. The sequence is that of Ferredoxin from Acetoanaerobium sticklandii (strain ATCC 12662 / DSM 519 / JCM 1433 / CCUG 9281 / NCIMB 10654 / HF) (Clostridium sticklandii).